Reading from the N-terminus, the 253-residue chain is LexA repressor (253 aa).

The segment at methionine 1–arginine 33 is disordered. The segment at residues valine 54–lysine 74 is a DNA-binding region (H-T-H motif). Catalysis depends on for autocatalytic cleavage activity residues serine 177 and lysine 214.

This sequence belongs to the peptidase S24 family. In terms of assembly, homodimer.

It carries out the reaction Hydrolysis of Ala-|-Gly bond in repressor LexA.. Functionally, represses a number of genes involved in the response to DNA damage (SOS response), including recA and lexA. In the presence of single-stranded DNA, RecA interacts with LexA causing an autocatalytic cleavage which disrupts the DNA-binding part of LexA, leading to derepression of the SOS regulon and eventually DNA repair. This Frankia alni (strain DSM 45986 / CECT 9034 / ACN14a) protein is LexA repressor.